The chain runs to 256 residues: Leucyl/phenylalanyl-tRNA--protein transferase (256 aa).

Positions Met-1–Leu-21 are disordered.

It belongs to the L/F-transferase family.

It is found in the cytoplasm. It catalyses the reaction N-terminal L-lysyl-[protein] + L-leucyl-tRNA(Leu) = N-terminal L-leucyl-L-lysyl-[protein] + tRNA(Leu) + H(+). The enzyme catalyses N-terminal L-arginyl-[protein] + L-leucyl-tRNA(Leu) = N-terminal L-leucyl-L-arginyl-[protein] + tRNA(Leu) + H(+). It carries out the reaction L-phenylalanyl-tRNA(Phe) + an N-terminal L-alpha-aminoacyl-[protein] = an N-terminal L-phenylalanyl-L-alpha-aminoacyl-[protein] + tRNA(Phe). In terms of biological role, functions in the N-end rule pathway of protein degradation where it conjugates Leu, Phe and, less efficiently, Met from aminoacyl-tRNAs to the N-termini of proteins containing an N-terminal arginine or lysine. This chain is Leucyl/phenylalanyl-tRNA--protein transferase, found in Leptothrix cholodnii (strain ATCC 51168 / LMG 8142 / SP-6) (Leptothrix discophora (strain SP-6)).